Reading from the N-terminus, the 665-residue chain is Zinc finger CCCH domain-containing protein 45 (665 aa).

The tract at residues 1-55 is disordered; it reads MDDGDLSFDFEGGLDQPPAGGGGGPAPHSSDPGGVGGGGGGGGPGDGGGHGRGRG. The span at 33–50 shows a compositional bias: gly residues; that stretch reads GGVGGGGGGGGPGDGGGH. 3 consecutive C3H1-type zinc fingers follow at residues 58 to 85, 86 to 113, and 114 to 139; these read SYRQ…HQFD, KARM…HSYD, and DVKE…HVKL. Residues 167-256 are disordered; it reads HNNYNQQGER…QATRIATPLP (90 aa). Polar residues predominate over residues 169-200; it reads NYNQQGERPQHPQGSGLPNQNSIDNTTTTTAQ. Positions 205–238 are enriched in low complexity; sequence QQAQTTNQQPPQQQQQQQQQQQQQQKPNTNDQVQ. Polar residues predominate over residues 239 to 250; the sequence is SVPNGSSNQATR. Residues 260–395 enclose the YTH domain; it reads SRYFIVKSCN…FIGEQLASLL (136 aa). Positions 432–459 form a coiled coil; sequence DIVLFDDNEEEEEEESEEEEEGNGQESQ. Residues 439–454 are compositionally biased toward acidic residues; the sequence is NEEEEEEESEEEEEGN. 2 disordered regions span residues 439-469 and 561-665; these read NEEE…GMMW and GPLM…SRKR. Residues 561–573 show a composition bias toward gly residues; it reads GPLMGGLGMGGPG. A compositionally biased stretch (basic and acidic residues) spans 596-623; it reads TKREQRRPGGERGDRYETTSDQGSRGHD.

The chain is Zinc finger CCCH domain-containing protein 45 from Oryza sativa subsp. japonica (Rice).